Here is a 206-residue protein sequence, read N- to C-terminus: Pyrrolidone-carboxylate peptidase 2 (206 aa).

Active-site residues include Glu-78, Cys-141, and His-165.

It belongs to the peptidase C15 family. As to quaternary structure, homotetramer.

The protein localises to the cytoplasm. It catalyses the reaction Release of an N-terminal pyroglutamyl group from a polypeptide, the second amino acid generally not being Pro.. Functionally, removes 5-oxoproline from various penultimate amino acid residues except L-proline. The sequence is that of Pyrrolidone-carboxylate peptidase 2 from Caldanaerobacter subterraneus subsp. tengcongensis (strain DSM 15242 / JCM 11007 / NBRC 100824 / MB4) (Thermoanaerobacter tengcongensis).